A 290-amino-acid polypeptide reads, in one-letter code: Diaminopimelate epimerase (290 aa).

Residues N17, Q49, and N69 each coordinate substrate. C78 (proton donor) is an active-site residue. Substrate contacts are provided by residues 79 to 80 (GN), N166, N199, and 217 to 218 (ER). C226 (proton acceptor) is an active-site residue. 227–228 (GS) is a substrate binding site.

This sequence belongs to the diaminopimelate epimerase family. As to quaternary structure, homodimer.

The protein localises to the cytoplasm. It catalyses the reaction (2S,6S)-2,6-diaminopimelate = meso-2,6-diaminopimelate. It functions in the pathway amino-acid biosynthesis; L-lysine biosynthesis via DAP pathway; DL-2,6-diaminopimelate from LL-2,6-diaminopimelate: step 1/1. Functionally, catalyzes the stereoinversion of LL-2,6-diaminopimelate (L,L-DAP) to meso-diaminopimelate (meso-DAP), a precursor of L-lysine and an essential component of the bacterial peptidoglycan. The polypeptide is Diaminopimelate epimerase (Afipia carboxidovorans (strain ATCC 49405 / DSM 1227 / KCTC 32145 / OM5) (Oligotropha carboxidovorans)).